Consider the following 186-residue polypeptide: Putative manganese efflux pump MntP (186 aa).

A run of 6 helical transmembrane segments spans residues 3–23 (PIALLLLAFAMSTDAFAAAIG), 39–59 (IGIIFGSIEAITPLVGWLIGK), 65–85 (VEAWDHWIAFSLLTVLGLHMI), 109–129 (CLTAFSTSIDAMAVGVSLAFI), 133–153 (IWIASALIGLATTLMVTIGIM), and 166–186 (AEIFGGLTLIAVGAWILYGQL).

The protein belongs to the MntP (TC 9.B.29) family.

Its subcellular location is the cell inner membrane. In terms of biological role, probably functions as a manganese efflux pump. This Alcanivorax borkumensis (strain ATCC 700651 / DSM 11573 / NCIMB 13689 / SK2) protein is Putative manganese efflux pump MntP.